A 372-amino-acid chain; its full sequence is Adaptive-response sensory kinase SasA (372 aa).

The Histidine kinase domain occupies 147 to 360 (MVAHELRTPL…CFHFTVPVWQ (214 aa)). Position 150 is a phosphohistidine; by autocatalysis (H150).

Homooligomerizes. Interacts with KaiC. Participates in the KaiBC complex, whose core is composed of a KaiC homohexamer and 6 KaiB.

It carries out the reaction ATP + protein L-histidine = ADP + protein N-phospho-L-histidine.. In terms of biological role, member of the two-component regulatory system SasA/RpaA involved in genome-wide circadian gene expression. One of several clock output pathways. Participates in the Kai clock protein complex, the main circadian regulator in cyanobacteria, via its interaction with KaiC. KaiC enhances the autophosphorylation activity of SasA, which then transfers its phosphate group to RpaA to activate it. In addition to its output function, recruits fold-shifted KaiB (KaiB(fs)) to KaiC to cooperatively form the KaiB(6):KaiC(6) complex (independent of SasA kinase activity). Required for robustness of the circadian rhythm of gene expression and is involved in clock output, also required for adaptation to light/dark cycles. The protein is Adaptive-response sensory kinase SasA of Prochlorococcus marinus (strain AS9601).